The following is a 421-amino-acid chain: ATP-dependent RNA helicase RhlB (421 aa).

The Q motif signature appears at 9–37 (QKFSDFALHPKVIEALENKGFHNCTPIQA). The region spanning 40–219 (LPLTLAGRDV…FEQMNNAEYV (180 aa)) is the Helicase ATP-binding domain. Position 53–60 (53–60 (AQTGTGKT)) interacts with ATP. The short motif at 165–168 (DEAD) is the DEAD box element. A Helicase C-terminal domain is found at 245–390 (RLLQTLIEEE…VSKYNPEALM (146 aa)). Positions 393-421 (LPKPLRLTRSRPGNGPRRTGAPRNRRRSG) are disordered. Residues 403 to 414 (RPGNGPRRTGAP) show a composition bias toward low complexity.

It belongs to the DEAD box helicase family. RhlB subfamily. As to quaternary structure, component of the RNA degradosome, which is a multiprotein complex involved in RNA processing and mRNA degradation.

The protein resides in the cytoplasm. It carries out the reaction ATP + H2O = ADP + phosphate + H(+). Its function is as follows. DEAD-box RNA helicase involved in RNA degradation. Has RNA-dependent ATPase activity and unwinds double-stranded RNA. This Citrobacter koseri (strain ATCC BAA-895 / CDC 4225-83 / SGSC4696) protein is ATP-dependent RNA helicase RhlB.